The following is a 203-amino-acid chain: Calcineurin B-like protein 5 (203 aa).

G2 carries N-myristoyl glycine lipidation. 4 consecutive EF-hand domains span residues 30 to 65 (EVEV…KNTK), 66 to 101 (KRSL…FHPN), 103 to 138 (SPRD…VLEE), and 147 to 182 (IIDS…YPLT).

The protein belongs to the calcineurin regulatory subunit family. In terms of assembly, homodimer. Interacts with PP2CA, CIPK2, CIPK11, CIPK23 and CIPK24. Post-translationally, both N-myristoylation and calcium-mediated conformational changes are essential for its function. Expressed in green tissues, but not in the roots.

It localises to the cytoplasm. The protein resides in the nucleus. In terms of biological role, acts as a calcium sensor. CBL proteins interact with CIPK serine-threonine protein kinases. Binding of a CBL protein to the regulatory NAF domain of a CIPK protein lead to the activation of the kinase in a calcium-dependent manner. May function as a positive regulator of salt or drought responses. This is Calcineurin B-like protein 5 (CBL5) from Arabidopsis thaliana (Mouse-ear cress).